Here is a 322-residue protein sequence, read N- to C-terminus: Glutamyl-Q tRNA(Asp) synthetase (322 aa).

L-glutamate contacts are provided by residues 28–32 (RFAPS) and Glu64. A 'HIGH' region motif is present at residues 31–41 (PSPSGDLHFGS). Zn(2+)-binding residues include Cys120, Cys122, Tyr134, and Cys138. 2 residues coordinate L-glutamate: Tyr191 and Arg209. Residues 247–251 (KLSKQ) carry the 'KMSKS' region motif. An ATP-binding site is contributed by Lys250.

It belongs to the class-I aminoacyl-tRNA synthetase family. GluQ subfamily. Zn(2+) is required as a cofactor.

Functionally, catalyzes the tRNA-independent activation of glutamate in presence of ATP and the subsequent transfer of glutamate onto a tRNA(Asp). Glutamate is transferred on the 2-amino-5-(4,5-dihydroxy-2-cyclopenten-1-yl) moiety of the queuosine in the wobble position of the QUC anticodon. The protein is Glutamyl-Q tRNA(Asp) synthetase of Pectobacterium atrosepticum (strain SCRI 1043 / ATCC BAA-672) (Erwinia carotovora subsp. atroseptica).